A 288-amino-acid polypeptide reads, in one-letter code: Mortality factor 4-like protein 2 (288 aa).

The segment covering 1–15 (MSSRKQGSQPRGQQS) has biased composition (polar residues). A disordered region spans residues 1–113 (MSSRKQGSQP…RADPTVESEE (113 aa)). Phosphoserine is present on S71. The MRG domain occupies 117 to 288 (NRMEVKVKIP…ASAEYHRKAL (172 aa)).

In terms of assembly, component of the NuA4 histone acetyltransferase complex which contains the catalytic subunit KAT5/TIP60 and the subunits EP400, TRRAP/PAF400, BRD8/SMAP, EPC1, DMAP1/DNMAP1, RUVBL1/TIP49, RUVBL2, ING3, actin, ACTL6A/BAF53A, MORF4L1/MRG15, MORF4L2/MRGX, MRGBP, YEATS4/GAS41 and VPS72/YL1. The NuA4 complex interacts with MYC and the adenovirus E1A protein. MORF4L1 may also participate in the formation of NuA4 related complexes which lack the KAT5/TIP60 catalytic subunit, but which include the SWI/SNF related protein SRCAP. Component of the MSIN3A histone deacetylase complex, which includes SIN3A, HDAC2, ARID4B, MORF4L1, RBBP4/RbAp48, and RBBP7/RbAp46. Interacts with MRFAP1 and RB1. May also interact with one or more as yet undefined members of the TLE (transducin-like enhancer of split) family of transcriptional repressors.

The protein localises to the nucleus. Component of the NuA4 histone acetyltransferase complex which is involved in transcriptional activation of select genes principally by acetylation of nucleosomal histone H4 and H2A. This modification may both alter nucleosome - DNA interactions and promote interaction of the modified histones with other proteins which positively regulate transcription. This complex may be required for the activation of transcriptional programs associated with oncogene and proto-oncogene mediated growth induction, tumor suppressor mediated growth arrest and replicative senescence, apoptosis, and DNA repair. The NuA4 complex ATPase and helicase activities seem to be, at least in part, contributed by the association of RUVBL1 and RUVBL2 with EP400. NuA4 may also play a direct role in DNA repair when directly recruited to sites of DNA damage. Also a component of the MSIN3A complex which acts to repress transcription by deacetylation of nucleosomal histones. The protein is Mortality factor 4-like protein 2 (MORF4L2) of Macaca fascicularis (Crab-eating macaque).